Reading from the N-terminus, the 438-residue chain is RNA ligase (438 aa).

ATP contacts are provided by Tyr-48, Arg-63, and Lys-83. Catalysis depends on Lys-127, which acts as the N6-AMP-lysine intermediate. Positions 198, 311, and 313 each coordinate ATP. Asp-342 lines the Mg(2+) pocket.

Mg(2+) is required as a cofactor. Mn(2+) serves as cofactor.

Involved in countering a host defense mechanism which, following viral infection, activates the host induced anticodon nuclease and shuts off viral translation. Repairs 5'-PO4 and 3'-OH groups in the cleaved host tRNA. This Rhodothermus phage RM378 (Bacteriophage RM378) protein is RNA ligase.